The chain runs to 427 residues: Tyrosine--tRNA ligase (427 aa).

Tyr-33 contributes to the L-tyrosine binding site. Positions Pro-38 to Asn-47 match the 'HIGH' region motif. The L-tyrosine site is built by Tyr-168 and Gln-172. A 'KMSKS' region motif is present at residues Lys-228–Ser-232. An ATP-binding site is contributed by Lys-231. Positions Glu-358 to Val-426 constitute an S4 RNA-binding domain.

It belongs to the class-I aminoacyl-tRNA synthetase family. TyrS type 1 subfamily. In terms of assembly, homodimer.

The protein resides in the cytoplasm. The enzyme catalyses tRNA(Tyr) + L-tyrosine + ATP = L-tyrosyl-tRNA(Tyr) + AMP + diphosphate + H(+). Functionally, catalyzes the attachment of tyrosine to tRNA(Tyr) in a two-step reaction: tyrosine is first activated by ATP to form Tyr-AMP and then transferred to the acceptor end of tRNA(Tyr). This Amoebophilus asiaticus (strain 5a2) protein is Tyrosine--tRNA ligase.